Reading from the N-terminus, the 169-residue chain is Ribosome maturation factor RimP (169 aa).

The protein belongs to the RimP family.

The protein localises to the cytoplasm. Its function is as follows. Required for maturation of 30S ribosomal subunits. The polypeptide is Ribosome maturation factor RimP (Coprothermobacter proteolyticus (strain ATCC 35245 / DSM 5265 / OCM 4 / BT)).